Reading from the N-terminus, the 187-residue chain is Guanylate kinase (187 aa).

Positions 5 to 183 (GRLTVLTGPS…ALKQLETHMQ (179 aa)) constitute a Guanylate kinase-like domain. 12 to 19 (GPSGVGKG) provides a ligand contact to ATP.

The protein belongs to the guanylate kinase family.

It localises to the cytoplasm. It carries out the reaction GMP + ATP = GDP + ADP. It catalyses the reaction dZMP + ATP = dZDP + ADP. It functions in the pathway purine metabolism. Essential for recycling GMP and indirectly, cGMP. Functionally, (Microbial infection) Catalyzes the phosphorylation of dZMP to dZDP, when the bacterium is infected by a phage that produces the substrate for the synthesis of dZTP (2- amino-2'-deoxyadenosine 5'-triphosphate), which is then used by the phage as a DNA polymerase substrate. In Synechococcus sp. (strain CC9902), this protein is Guanylate kinase.